Reading from the N-terminus, the 189-residue chain is Protein GrpE (189 aa).

The tract at residues 1–37 (MSDSSKEKKKKFADMVSRQKGDDQQSDNHKQTDDLNE) is disordered. The span at 17 to 33 (SRQKGDDQQSDNHKQTD) shows a compositional bias: basic and acidic residues.

Belongs to the GrpE family. As to quaternary structure, homodimer.

Its subcellular location is the cytoplasm. Functionally, participates actively in the response to hyperosmotic and heat shock by preventing the aggregation of stress-denatured proteins, in association with DnaK and GrpE. It is the nucleotide exchange factor for DnaK and may function as a thermosensor. Unfolded proteins bind initially to DnaJ; upon interaction with the DnaJ-bound protein, DnaK hydrolyzes its bound ATP, resulting in the formation of a stable complex. GrpE releases ADP from DnaK; ATP binding to DnaK triggers the release of the substrate protein, thus completing the reaction cycle. Several rounds of ATP-dependent interactions between DnaJ, DnaK and GrpE are required for fully efficient folding. This is Protein GrpE from Wolbachia sp. subsp. Drosophila simulans (strain wRi).